We begin with the raw amino-acid sequence, 204 residues long: Large ribosomal subunit protein uL4 (204 aa).

The segment at 49 to 74 is disordered; sequence AKKRGEVSGGGKKPWSQKGGGRARAG. Gly residues predominate over residues 55 to 71; it reads VSGGGKKPWSQKGGGRA.

The protein belongs to the universal ribosomal protein uL4 family. In terms of assembly, part of the 50S ribosomal subunit.

Functionally, one of the primary rRNA binding proteins, this protein initially binds near the 5'-end of the 23S rRNA. It is important during the early stages of 50S assembly. It makes multiple contacts with different domains of the 23S rRNA in the assembled 50S subunit and ribosome. Its function is as follows. Forms part of the polypeptide exit tunnel. The sequence is that of Large ribosomal subunit protein uL4 from Wolinella succinogenes (strain ATCC 29543 / DSM 1740 / CCUG 13145 / JCM 31913 / LMG 7466 / NCTC 11488 / FDC 602W) (Vibrio succinogenes).